Here is a 517-residue protein sequence, read N- to C-terminus: ATP synthase subunit alpha (517 aa).

Position 174 to 181 (174 to 181 (GDRQTGKT)) interacts with ATP.

Belongs to the ATPase alpha/beta chains family. As to quaternary structure, F-type ATPases have 2 components, CF(1) - the catalytic core - and CF(0) - the membrane proton channel. CF(1) has five subunits: alpha(3), beta(3), gamma(1), delta(1), epsilon(1). CF(0) has three main subunits: a(1), b(2) and c(9-12). The alpha and beta chains form an alternating ring which encloses part of the gamma chain. CF(1) is attached to CF(0) by a central stalk formed by the gamma and epsilon chains, while a peripheral stalk is formed by the delta and b chains.

It is found in the cell inner membrane. It catalyses the reaction ATP + H2O + 4 H(+)(in) = ADP + phosphate + 5 H(+)(out). In terms of biological role, produces ATP from ADP in the presence of a proton gradient across the membrane. The alpha chain is a regulatory subunit. In Delftia acidovorans (strain DSM 14801 / SPH-1), this protein is ATP synthase subunit alpha.